The chain runs to 142 residues: MTTFTAKSETVQRDWYLVDAAGKTLGRLSTELARRLRGKHKPVYTPHVDTGDYLVVINAEKIVVTGNKLKDKKYHRFTGYIGNLKTESLEQALQRHPERVIEIAVKGMLPKGPLGRTMYRKLKVYSGAEHPHAAQQPQVLDI.

The protein belongs to the universal ribosomal protein uL13 family. Part of the 50S ribosomal subunit.

In terms of biological role, this protein is one of the early assembly proteins of the 50S ribosomal subunit, although it is not seen to bind rRNA by itself. It is important during the early stages of 50S assembly. The chain is Large ribosomal subunit protein uL13 from Xanthomonas campestris pv. campestris (strain ATCC 33913 / DSM 3586 / NCPPB 528 / LMG 568 / P 25).